A 460-amino-acid chain; its full sequence is ATP synthase subunit beta (460 aa).

Residue 150-157 (GGAGVGKT) coordinates ATP.

Belongs to the ATPase alpha/beta chains family. In terms of assembly, F-type ATPases have 2 components, CF(1) - the catalytic core - and CF(0) - the membrane proton channel. CF(1) has five subunits: alpha(3), beta(3), gamma(1), delta(1), epsilon(1). CF(0) has three main subunits: a(1), b(2) and c(9-12). The alpha and beta chains form an alternating ring which encloses part of the gamma chain. CF(1) is attached to CF(0) by a central stalk formed by the gamma and epsilon chains, while a peripheral stalk is formed by the delta and b chains.

It is found in the cell inner membrane. It catalyses the reaction ATP + H2O + 4 H(+)(in) = ADP + phosphate + 5 H(+)(out). Produces ATP from ADP in the presence of a proton gradient across the membrane. The catalytic sites are hosted primarily by the beta subunits. The polypeptide is ATP synthase subunit beta (Sodalis glossinidius (strain morsitans)).